Reading from the N-terminus, the 177-residue chain is 2-C-methyl-D-erythritol 2,4-cyclodiphosphate synthase (177 aa).

A divalent metal cation-binding residues include aspartate 8 and histidine 10. Residues 8–10 and 34–35 each bind 4-CDP-2-C-methyl-D-erythritol 2-phosphate; these read DVH and HS. Residue histidine 42 coordinates a divalent metal cation. Residues 56–58, 61–65, 132–135, phenylalanine 139, and arginine 142 each bind 4-CDP-2-C-methyl-D-erythritol 2-phosphate; these read DIG, FPDTD, and TTEE.

The protein belongs to the IspF family. As to quaternary structure, homotrimer. Requires a divalent metal cation as cofactor.

It carries out the reaction 4-CDP-2-C-methyl-D-erythritol 2-phosphate = 2-C-methyl-D-erythritol 2,4-cyclic diphosphate + CMP. It participates in isoprenoid biosynthesis; isopentenyl diphosphate biosynthesis via DXP pathway; isopentenyl diphosphate from 1-deoxy-D-xylulose 5-phosphate: step 4/6. Functionally, involved in the biosynthesis of isopentenyl diphosphate (IPP) and dimethylallyl diphosphate (DMAPP), two major building blocks of isoprenoid compounds. Catalyzes the conversion of 4-diphosphocytidyl-2-C-methyl-D-erythritol 2-phosphate (CDP-ME2P) to 2-C-methyl-D-erythritol 2,4-cyclodiphosphate (ME-CPP) with a corresponding release of cytidine 5-monophosphate (CMP). In Agathobacter rectalis (strain ATCC 33656 / DSM 3377 / JCM 17463 / KCTC 5835 / VPI 0990) (Eubacterium rectale), this protein is 2-C-methyl-D-erythritol 2,4-cyclodiphosphate synthase.